A 279-amino-acid polypeptide reads, in one-letter code: Undecaprenyl-diphosphatase (279 aa).

7 helical membrane passes run 10 to 30 (FICFKSFFLGIIQGFTEFLPI), 48 to 68 (LGVSFSASIQLGSAVAIIYYF), 96 to 116 (LFIYIFVASIPILVFGLLIKL), 128 to 148 (GLFSIAITSIVMSLLLALSEI), 203 to 223 (SFLVGIPAVSISGLVELFSLF), 229 to 249 (IDIIPIIIGIISSFFSSIFAI), and 259 to 279 (NNTLVFVYYRLAFGIFILTTL).

It belongs to the UppP family.

The protein resides in the cell inner membrane. It catalyses the reaction di-trans,octa-cis-undecaprenyl diphosphate + H2O = di-trans,octa-cis-undecaprenyl phosphate + phosphate + H(+). Its function is as follows. Catalyzes the dephosphorylation of undecaprenyl diphosphate (UPP). Confers resistance to bacitracin. The polypeptide is Undecaprenyl-diphosphatase (Prochlorococcus marinus (strain NATL1A)).